The chain runs to 257 residues: Snake venom serine protease serpentokallikrein-2 (257 aa).

Positions 1-18 are cleaved as a signal peptide; it reads MVLIRVLANLLILQLSYA. A propeptide spanning residues 19–24 is cleaved from the precursor; that stretch reads QKSSEL. The 224-residue stretch at 25–248 folds into the Peptidase S1 domain; it reads VIGGDECNIN…HLDWIKGIIA (224 aa). 6 disulfides stabilise this stretch: Cys-31–Cys-162, Cys-49–Cys-65, Cys-97–Cys-255, Cys-141–Cys-209, Cys-173–Cys-188, and Cys-199–Cys-224. His-64 acts as the Charge relay system in catalysis. N-linked (GlcNAc...) asparagine glycosylation is present at Asn-102. Asp-109 (charge relay system) is an active-site residue. Residue Ser-203 is the Charge relay system of the active site.

This sequence belongs to the peptidase S1 family. Snake venom subfamily. Monomer. In terms of tissue distribution, expressed by the venom gland.

It localises to the secreted. Snake venom serine protease that may act in the hemostasis system of the prey. The chain is Snake venom serine protease serpentokallikrein-2 from Protobothrops mucrosquamatus (Taiwan habu).